Reading from the N-terminus, the 2326-residue chain is MARLGNDVPACYGGSPAGGGRGANRHAGPQAGQRGMYGSKSLAQRARTMALYNPIPVRQNCLTVNRSLFIFSEDNIIRKYAKRITEWPPFEYMILATIIANCIVLALEQHLPDGDKTPMSERLDDTEPYFIGIFCFEAGIKIIALGFAFHKGSYLRNGWNVMDFVVVLTGILTTIGTDFDLRTLRAVRVLRPLKLVSGIPSLQVVLKSIMKAMVPLLQIGLLLFFAILMFAIIGLEFYMGKFHKTCFSEETNEPVEEFPCGTKYPSRLCPNGTVCKGYWNGPNFGITNFDNILFAVLTVFQCITMEGWTDMLYTANDALGNTWNWLYFIPLIVIGSFFMLNLVLGVLSGEFAKERERVENRRAFLKLRRQQQVEQEFNRYLRWIHIAEEVMLAEEDKNAEDKCALDVLKRATTKKSKNDLINAEEGEDHFTDISSVGFNRPSLKSVKNERSSYFRRKEKRFRFFIRRMVKSQSFYWIVLCLVGLNTLCVAIVHYDQPPLLTDALYFAEFVFLGLFLTEMSLKMYGLGPRNYFHSSFNCFDFGVIVGSIFEVVWTAVKPDTSFGISVLRALRLLRIFKVTKYWNSLRNLVVSLLNSMKSIISLLFLLFLFIVVFALLGMQLFGGQFNFEDGTPPTNFDTFPAAILTVFQILTGEDWNEVMYYGIEAHGGVKKGMFSSVYFIILTLFGNYTLLNVFLAIAVDNLANAQELTKDEEEMEEANIQKNTIQKAMEVADVSPISATNLSIAAKDQQKSFKSMSIWEQRTSQLRRQHILTSQEALFNELDDEQRRMYVSSHQIRPDMKTHLDRPLVVEPRNSTRKSADKVCPSDCQEGEQERLVQPESCEAPRRSHRHRDKLGEQDKGDGALDTGEPRANSKDDKRCSHRSHSKETEKERDEKGRKGERSRSHEGGRRHHHAQSSLDDAPEREHRRHRSHRHGTEQQHREANGTKGERHSRAKDGSRSGGREGEAVSRSHHAEGAERRRKHRQKVASTNESEEKREIGEKERETVLRERRVHRVKETQPSQDSGTQGNVSLPPIGLQHLPQQPEDADNQKNIKLVTLPTGDAQNPATVNIPVTVTTPAAEMTLLPINNVAVDLENVMKPEEKKAENGDDLNEDGPRQIPPFNSMFLFSTTNPVRRACHYIVNLRYFEMCILLVITMSSIALAAEDPVQGDAPRNNVLKYLDYVFTGVFTFEMVIKMINLGLILHPGSYFRDLWNILDFIVVSGALVAFAFTGSRGKDLNTIKSLRVLRVLRPLKTIKRLPKLKAVFDCVVNSLKNVLNILIVYMLFMFIFAVIAVQLFKGKFFYCTDESKDLEKDCRGQYLVYDNDEIEAEPREWKKCDFHYDNVLWALLTLFTVSTGEGWPTVLKNSIDATEEDQGPSPSYRMEMSIFYVVYFVVFPFFFVNIFVALIIITFQEQGDKVMSDCSLEKNERACIDFAISAKPLTRYMPQNKQTFQYKMWKFVVSPPFEYLIMALIALNTIVLMMKFYNAPDPYDRMLQYLNILFTFLFSMECVLKLIGFGVLNYFRDAWNVFDFVTVLGSITDILVTELADSFINLSFLRLFRAARLIKLLRQGYTIRILLWTFVQSFKALPYVCLLIAMLFFIYAIIGMQVFGNIELDDDGAINRHNNFRTFLQAVMLLLRSATGEGWQEIMLACLNQSPCDARSGIDGDECGSNFAYFYFVSFIFFSSFLMLNLFVAVIMDNFEYLTRDSSILGPHHLDEFIRVWAEYDPGARGRITYNDMYEMLRHMCPPLGLGKKCPARVAYKRLVRMNMPIAEDGSVHFTSTLMALIRTALDVKISPGGAYQQQCDAELRKEITAVWPNLSQKFLDILVPPQRASELTVGKVYAALMIYDYYKQNKSKKVQQQQQLSGLSQTRKSFFQRVVGVLAATQEEPSSYSTSHKNSVNPLYQGGRQKEPFSWLRSRDTCAEGKKEVPESHPEEAGVTKSSSQAVEMREMGSDLNHADQSSLENYGRAASMPRLTAETQKISRPSGRVRAPIADTSPMKRSVSTLTPQRSHVMPDYSLERVIPVQMPHHHHHHHRCHHRREKKQRSLERATNRHADEEAGQLDAQLRDQSSKERERGRSQERRPPSSAEKQRYYSCDRYGSREPPQPRSTDHSRSASPSTGTEQGFHRQGSGSVNDSPLQSASGSSTPSRGRRQLPRTPLTPRPSVTYKTANSSPAHFGNLHDALPPSSPGRLSRGQSEHNHLLSGESQNRPYAGGDSRQPMGTRISSDPYLGFRSSCGSEDLELLEETLTFEVAVAATTATGRSPRTSSFTTQPPQSRRVPNGYHCNLGRSTGPSTAASKRKYYRETDEDDWC.

The Cytoplasmic segment spans residues Met1–Arg83. The segment at Ala17–Tyr37 is disordered. An I repeat occupies Asn75–Phe351. A helical membrane pass occupies residues Ile84 to Leu107. Over Glu108–Asp124 the chain is Extracellular. A helical membrane pass occupies residues Asp125–Leu145. Residues Gly146 to Arg156 lie on the Cytoplasmic side of the membrane. The helical transmembrane segment at Asn157–Ile175 threads the bilayer. Residues Gly176–Asp180 lie on the Extracellular side of the membrane. The chain crosses the membrane as a helical span at residues Leu181–Val204. Topologically, residues Val205 to Val214 are cytoplasmic. Residues Pro215–Phe237 form a helical membrane-spanning segment. Topologically, residues Tyr238–Trp323 are extracellular. Residue Asn271 is glycosylated (N-linked (GlcNAc...) asparagine). Residues Asn324–Ser348 form a helical membrane-spanning segment. The Cytoplasmic portion of the chain corresponds to Gly349–Gln472. A binding to the beta subunit region spans residues Gln371–Glu388. An II repeat occupies Glu458 to Leu702. The chain crosses the membrane as a helical span at residues Ser473 to Ile491. Topologically, residues Val492–Thr501 are extracellular. Residues Asp502–Tyr524 form a helical membrane-spanning segment. The Cytoplasmic portion of the chain corresponds to Gly525–Ser534. Residue Ser534 participates in a 1,2-diacyl-sn-glycero-3-phospho-(1D-myo-inositol-4,5-bisphosphate) binding. Residues Ser535–Val556 form a helical membrane-spanning segment. The Extracellular portion of the chain corresponds to Lys557–Gly563. The chain crosses the membrane as a helical span at residues Ile564–Phe576. 2 residues coordinate a 1,2-diacyl-sn-glycero-3-phospho-(1D-myo-inositol-4,5-bisphosphate): Arg574 and Lys577. Topologically, residues Lys577–Asn594 are cytoplasmic. The chain crosses the membrane as a helical span at residues Ser595–Leu620. The Extracellular segment spans residues Phe621–Gly672. A helical transmembrane segment spans residues Met673–Val699. Residues Asp700 to Tyr1148 lie on the Cytoplasmic side of the membrane. A disordered region spans residues Ser793–Asp1048. 5 stretches are compositionally biased toward basic and acidic residues: residues Ile796–Leu808, Lys854–Arg879, Ser886–Gly908, His935–Glu979, and Ser994–Glu1011. The segment covering Thr1020 to Val1032 has biased composition (polar residues). An III repeat occupies Asn1134 to Phe1416. The helical transmembrane segment at Phe1149–Glu1167 threads the bilayer. At Asp1168–Pro1175 the chain is on the extracellular side. The chain crosses the membrane as a helical span at residues Arg1176–Ile1200. The Cytoplasmic segment spans residues Asn1201–Asp1214. Residues Leu1215–Gly1235 traverse the membrane as a helical segment. The Extracellular segment spans residues Ser1236–Leu1241. A helical membrane pass occupies residues Asn1242–Leu1262. Over Pro1263–Leu1280 the chain is Cytoplasmic. A helical transmembrane segment spans residues Asn1281–Leu1300. Residues Phe1301–Met1387 lie on the Extracellular side of the membrane. The chain crosses the membrane as a helical span at residues Glu1388–Ile1413. At Ile1414 to Pro1468 the chain is on the cytoplasmic side. The stretch at Asn1453–Phe1708 is one IV repeat. A helical transmembrane segment spans residues Pro1469–Met1487. The Extracellular portion of the chain corresponds to Lys1488–Pro1495. The chain crosses the membrane as a helical span at residues Tyr1496–Ile1520. The Cytoplasmic segment spans residues Gly1521 to Asp1530. A helical transmembrane segment spans residues Ala1531–Leu1552. At Ala1553–Asn1558 the chain is on the extracellular side. An N-linked (GlcNAc...) asparagine glycan is attached at Asn1558. A helical transmembrane segment spans residues Leu1559–Gly1577. At Tyr1578–Tyr1596 the chain is on the cytoplasmic side. The chain crosses the membrane as a helical span at residues Val1597–Phe1616. Residues Gly1617–Phe1680 lie on the Extracellular side of the membrane. The helical transmembrane segment at Ala1681–Ile1704 threads the bilayer. Topologically, residues Met1705–Cys2326 are cytoplasmic. The 36-residue stretch at His1721–Pro1756 folds into the EF-hand domain. Ca(2+) is bound by residues Asp1734, Arg1740, and Asp1745. Over residues Glu1897 to Pro1912 the composition is skewed to polar residues. Disordered regions lie at residues Glu1897–Gly1916, Cys1932–Ser1954, Pro2039–Pro2242, and Thr2271–Cys2326. The span at Cys1932–Gly1948 shows a compositional bias: basic and acidic residues. A compositionally biased stretch (basic residues) spans Pro2039–Lys2055. 2 stretches are compositionally biased toward basic and acidic residues: residues Gln2056–Glu2069 and Gln2077–Arg2104. 3 stretches are compositionally biased toward polar residues: residues Gly2142–Ser2161, Gly2275–Gln2289, and Gly2302–Ala2311.

The protein belongs to the calcium channel alpha-1 subunit (TC 1.A.1.11) family. Multisubunit complex consisting of alpha-1, alpha-2, beta and delta subunits in a 1:1:1:1 ratio. The channel activity is directed by the pore-forming and voltage-sensitive alpha-1 subunit. In many cases, this subunit is sufficient to generate voltage-sensitive calcium channel activity. The auxiliary subunits beta and alpha-2/delta linked by a disulfide bridge regulate the channel activity. Phosphorylated in vitro by CaM-kinase II, PKA, PKC and CGPK. In terms of tissue distribution, expression is higher in the electric lobe than in the forebrain.

Its subcellular location is the membrane. In terms of biological role, the isoform alpha-1B gives rise to N-type calcium currents. N-type calcium channels belong to the 'high-voltage activated' (HVA) group. This Diplobatis ommata (Ocellated electric ray) protein is Probable voltage-dependent N-type calcium channel subunit alpha-1B.